The sequence spans 335 residues: MIEFHDVHKTYRVAGREIPALQPTRLNIQAGQIFGLIGHSGAGKSTLLRLINRLEEPSGGRILVEGEDVTALDAEGLRRFRQRVGMIFQHFNLLSSKTVADNIAMPLRLAGGFSRAEVDARVSELLARVGLSDHARKYPAQLSGGQKQRVGIARALACRPSILLCDEATSALDPQTTASVLQLLAEINRELKLTIVLITHEMDVIRRVCDQVAVMDGGAIVEQGDVADVFLHPQHPTTRRFVFEAERVDEDERHDDFAHVPGLILRLTFRGEATYAPLLGTVARQTGVDYSILSGRIDRIKDTPYGQLTLALVGGDLEAAMSQLNAADVHVEVLR.

In terms of domain architecture, ABC transporter spans 2-242 (IEFHDVHKTY…PQHPTTRRFV (241 aa)). 38-45 (GHSGAGKS) contributes to the ATP binding site.

It belongs to the ABC transporter superfamily. Methionine importer (TC 3.A.1.24) family. In terms of assembly, the complex is composed of two ATP-binding proteins (MetN), two transmembrane proteins (MetI) and a solute-binding protein (MetQ).

Its subcellular location is the cell inner membrane. The enzyme catalyses L-methionine(out) + ATP + H2O = L-methionine(in) + ADP + phosphate + H(+). It catalyses the reaction D-methionine(out) + ATP + H2O = D-methionine(in) + ADP + phosphate + H(+). Functionally, part of the ABC transporter complex MetNIQ involved in methionine import. Responsible for energy coupling to the transport system. The polypeptide is Methionine import ATP-binding protein MetN 2 (Pseudomonas aeruginosa (strain UCBPP-PA14)).